Consider the following 461-residue polypeptide: MLKIFNTLTRQKEEFKPIHAGEVGMYVCGITVYDLCHIGHGRTFVSFDVVSRYLRFLGYTLKYVRNITDIDDKIIKRANENGESFVALVDRMIAEMHKDFDALNILRPDSEPRATHHIHEIIEITEKLIERGHAYVASNGDVMFSVPTDPGYGQLSRQDLEQLQAGARVDVVDVKRNPMDFVLWKTSKEGEPSWPSPWGEGRPGWHIECSAMNCKQLGNHFDIHGGGSDLMFPHHENEIAQSTCAHGGEYVNYWMHSGMVMVDREKMSKSLDNFFTVRDVLKYYDAETVRYFLMSGHYRSQLNYSEENLKQARSALERLYIAVRGTDKSVAPAGGEAFEARFIDVMNDDFNTPEAYSVLFDMAREINRLKVEDVSAANALASHLRKLAAVLGLLEQDPETFLQSGAQNDGDEVAKIEALITARLEARQAKDWAAADAARNRLTEMGIVLEDGPQGTIWRRK.

A Zn(2+)-binding site is contributed by cysteine 28. The 'HIGH' region signature appears at 30–40 (ITVYDLCHIGH). 3 residues coordinate Zn(2+): cysteine 209, histidine 234, and glutamate 238. The 'KMSKS' region motif lies at 266–270 (KMSKS). Lysine 269 serves as a coordination point for ATP.

The protein belongs to the class-I aminoacyl-tRNA synthetase family. Monomer. Zn(2+) is required as a cofactor.

The protein localises to the cytoplasm. The enzyme catalyses tRNA(Cys) + L-cysteine + ATP = L-cysteinyl-tRNA(Cys) + AMP + diphosphate. This is Cysteine--tRNA ligase from Enterobacter sp. (strain 638).